We begin with the raw amino-acid sequence, 315 residues long: PDZ domain-containing protein GIPC2 (315 aa).

Positions methionine 1–lysine 12 are enriched in basic residues. Residues methionine 1–alanine 34 are disordered. The PDZ domain maps to glutamate 117–glutamate 197.

This sequence belongs to the GIPC family. As to quaternary structure, probably interacts with SEMA5A. Expressed at highest levels in ascending colon and at moderate levels in adult kidney. Expressed at low levels in adult pancreas and at very low levels in adult liver. Expression is down-regulated in several primary tumors, such as kidney, colon and rectal tumors.

Its subcellular location is the cytoplasm. The protein is PDZ domain-containing protein GIPC2 (GIPC2) of Homo sapiens (Human).